Here is a 139-residue protein sequence, read N- to C-terminus: D-ribose pyranase (139 aa).

His-20 functions as the Proton donor in the catalytic mechanism. Substrate is bound by residues Asp-28, His-106, and 128–130 (YAN).

The protein belongs to the RbsD / FucU family. RbsD subfamily. In terms of assembly, homodecamer.

The protein localises to the cytoplasm. The catalysed reaction is beta-D-ribopyranose = beta-D-ribofuranose. It functions in the pathway carbohydrate metabolism; D-ribose degradation; D-ribose 5-phosphate from beta-D-ribopyranose: step 1/2. Catalyzes the interconversion of beta-pyran and beta-furan forms of D-ribose. This is D-ribose pyranase from Aliivibrio fischeri (strain ATCC 700601 / ES114) (Vibrio fischeri).